Reading from the N-terminus, the 99-residue chain is DNA-directed RNA polymerase subunit omega (99 aa).

Belongs to the RNA polymerase subunit omega family. The RNAP catalytic core consists of 2 alpha, 1 beta, 1 beta' and 1 omega subunit. When a sigma factor is associated with the core the holoenzyme is formed, which can initiate transcription.

The enzyme catalyses RNA(n) + a ribonucleoside 5'-triphosphate = RNA(n+1) + diphosphate. Promotes RNA polymerase assembly. Latches the N- and C-terminal regions of the beta' subunit thereby facilitating its interaction with the beta and alpha subunits. The protein is DNA-directed RNA polymerase subunit omega of Thermus thermophilus (strain ATCC BAA-163 / DSM 7039 / HB27).